The sequence spans 563 residues: Arginine--tRNA ligase (563 aa).

A 'HIGH' region motif is present at residues 121-131 (PNIAKPFSIGH).

It belongs to the class-I aminoacyl-tRNA synthetase family. Monomer.

It localises to the cytoplasm. The enzyme catalyses tRNA(Arg) + L-arginine + ATP = L-arginyl-tRNA(Arg) + AMP + diphosphate. This chain is Arginine--tRNA ligase, found in Streptococcus pyogenes serotype M49 (strain NZ131).